The sequence spans 101 residues: Pro-corazonin (101 aa).

A signal peptide spans 1–16; it reads MLVLFVLSLVVSCALC. Asparagine amide is present on asparagine 27. A propeptide spanning residues 31–101 is cleaved from the precursor; it reads SNFPAEISAL…REKAPNNDNY (71 aa).

It belongs to the corazonin family. As to expression, expressed in central brain and the retrocerebral complex but not in antennal lobes, optic lobes or in gnathal, thoracic and abdominal ganglia (at protein level).

It localises to the secreted. Functionally, cardioactive peptide. Corazonin is probably involved in the physiological regulation of the heart beat. The sequence is that of Pro-corazonin from Camponotus floridanus (Florida carpenter ant).